The sequence spans 178 residues: Gamma-crystallin S (178 aa).

Position 2 is an N-acetylserine (Ser2). The segment at 2–5 (SKSG) is N-terminal arm. Beta/gamma crystallin 'Greek key' domains follow at residues 6–44 (TKITFYEDKHFQGRHYDCDCDCADFHMYLSRCNSIRVEG) and 45–87 (GTWA…RAVH). The segment at 88–93 (LSSGGQ) is connecting peptide. Beta/gamma crystallin 'Greek key' domains follow at residues 94–134 (YKIQ…KVLD) and 135–177 (GVWI…RRIV).

Belongs to the beta/gamma-crystallin family. As to quaternary structure, monomer.

Its function is as follows. Crystallins are the dominant structural components of the vertebrate eye lens. The chain is Gamma-crystallin S (CRYGS) from Canis lupus familiaris (Dog).